The primary structure comprises 331 residues: Isopenicillin N synthase (331 aa).

Residues R87, Y91, S183, and Y189 each contribute to the isopenicillin N site. N-[(5S)-5-amino-5-carboxypentanoyl]-L-cysteinyl-D-valine is bound by residues R87, Y91, S183, Y189, H214, and D216. A Fe2OG dioxygenase domain is found at 176–288 (KPDDTLASVV…RQSLPFFVNL (113 aa)). Fe(2+) contacts are provided by H214, D216, and H270. R279 serves as a coordination point for 2-oxoglutarate. An isopenicillin N-binding site is contributed by S281. S281 serves as a coordination point for N-[(5S)-5-amino-5-carboxypentanoyl]-L-cysteinyl-D-valine.

The protein belongs to the iron/ascorbate-dependent oxidoreductase family. Monomer. Fe(2+) is required as a cofactor.

Its subcellular location is the cytoplasm. The protein resides in the cytosol. It catalyses the reaction N-[(5S)-5-amino-5-carboxypentanoyl]-L-cysteinyl-D-valine + O2 = isopenicillin N + 2 H2O. Its pathway is antibiotic biosynthesis; penicillin G biosynthesis; penicillin G from L-alpha-aminoadipate and L-cysteine and L-valine: step 2/3. Its function is as follows. Isopenicillin N synthase; part of the gene cluster that mediates the biosynthesis of penicillin, the world's most important antibiotic. IpnA catalyzes the cyclization of the tripeptide N-[(5S)-5-amino-5-carboxypentanoyl]-L-cysteinyl-D-valine (LLD-ACV or ACV) to form isopenicillin N (IPN) that contains the beta-lactam nucleus. The penicillin biosynthesis occurs via 3 enzymatic steps, the first corresponding to the production of the tripeptide N-[(5S)-5-amino-5-carboxypentanoyl]-L-cysteinyl-D-valine (LLD-ACV or ACV) by the NRPS acvA. The tripeptide ACV is then cyclized to isopenicillin N (IPN) by the isopenicillin N synthase ipnA that forms the beta-lactam nucleus. Finally, the alpha-aminoadipyl side chain is exchanged for phenylacetic acid by the isopenicillin N acyltransferase penDE to yield penicillin in the peroxisomal matrix. This Emericella nidulans (strain FGSC A4 / ATCC 38163 / CBS 112.46 / NRRL 194 / M139) (Aspergillus nidulans) protein is Isopenicillin N synthase.